Reading from the N-terminus, the 421-residue chain is 3-isopropylmalate dehydratase large subunit (421 aa).

[4Fe-4S] cluster-binding residues include cysteine 302, cysteine 362, and cysteine 365.

Belongs to the aconitase/IPM isomerase family. LeuC type 2 subfamily. As to quaternary structure, heterodimer of LeuC and LeuD. The cofactor is [4Fe-4S] cluster.

The catalysed reaction is (2R,3S)-3-isopropylmalate = (2S)-2-isopropylmalate. It functions in the pathway amino-acid biosynthesis; L-leucine biosynthesis; L-leucine from 3-methyl-2-oxobutanoate: step 2/4. Its function is as follows. Catalyzes the isomerization between 2-isopropylmalate and 3-isopropylmalate, via the formation of 2-isopropylmaleate. The chain is 3-isopropylmalate dehydratase large subunit from Campylobacter curvus (strain 525.92).